A 495-amino-acid chain; its full sequence is Formin-like protein 17 (495 aa).

Residues 1-92 (MDIRELIDIT…HNLKGQGQTR (92 aa)) form a disordered region. Pro residues predominate over residues 19–29 (GPPPPPPPPLL). Residues 30–39 (QPHHSALSSS) show a composition bias toward low complexity. The region spanning 86 to 486 (KGQGQTRKAN…RAQKEAENEK (401 aa)) is the FH2 domain.

Belongs to the formin-like family. Class-II subfamily.

The polypeptide is Formin-like protein 17 (FH17) (Arabidopsis thaliana (Mouse-ear cress)).